The primary structure comprises 381 residues: Protein pelota homolog (381 aa).

Belongs to the eukaryotic release factor 1 family. Pelota subfamily. Component of the Pelota-HBS1L complex, also named Dom34-Hbs1 complex, composed of pelo-1 and hbs-1. A divalent metal cation serves as cofactor.

The protein resides in the cytoplasm. Its subcellular location is the nucleus. Its function is as follows. Component of the Pelota-HBS1L complex, a complex that recognizes stalled ribosomes and triggers the No-Go Decay (NGD) pathway. In the Pelota-HBS1L complex, pelo-1 recognizes ribosomes stalled at the 3' end of an mRNA and engages stalled ribosomes by destabilizing mRNA in the mRNA channel. Following ribosome-binding, the Pelota-HBS1L complex promotes the disassembly of stalled ribosomes, followed by degradation of damaged mRNAs as part of the NGD pathway. This is Protein pelota homolog from Caenorhabditis elegans.